A 715-amino-acid polypeptide reads, in one-letter code: Protein psiH (715 aa).

A signal peptide spans 1-20 (MNYLKPTIFLILCLVTFVYS). The Extracellular segment spans residues 21–651 (QPSTLTIQGT…ICKTGAVVST (631 aa)). Residues 115 to 256 (NYDSKKQVYV…YDYCGVCSGD (142 aa)) enclose the PA14 domain. N-linked (GlcNAc...) asparagine glycans are attached at residues Asn-149, Asn-377, Asn-528, and Asn-622. A helical membrane pass occupies residues 652–672 (AVIAGVTVAGAVALGVFIYGG). Residues 673-715 (KRGYDYWKESRNVQFSGSNSNPLYEQNPNGSGVNPLYNDNSAL) lie on the Cytoplasmic side of the membrane. Residues 690–715 (SNSNPLYEQNPNGSGVNPLYNDNSAL) are disordered.

Belongs to the prespore-cell-inducing factor family.

It is found in the membrane. This chain is Protein psiH (psiH), found in Dictyostelium discoideum (Social amoeba).